A 177-amino-acid chain; its full sequence is Retrograde regulation protein 1 (177 aa).

Residues 1-24 form a disordered region; that stretch reads MSSIPAGTDPGSCGANFKNDRKRR. One can recognise a bHLH domain in the interval 11-96; the sequence is GSCGANFKND…TQAVEYISHL (86 aa). Residues Ser50 and Ser52 each carry the phosphoserine modification. 2 disordered regions span residues 52–82 and 147–177; these read SNDT…KPNK and LAAT…GNGS. Thr60 is modified (phosphothreonine). Gly residues predominate over residues 168–177; it reads GGYGEYGNGS.

As to quaternary structure, binds DNA as a heterodimer with RTG3.

The protein localises to the nucleus. Functionally, required for a novel path of interorganelle communication between mitochondria, peroxisomes and the nucleus, thereby maintaining a functional metabolic interaction between the tricarboxylic acid and glyoxylate cycles. Transcription factor that regulates CIT2 gene expression. Binds to two identical sites oriented as inverted repeats 28 bp apart in a regulatory upstream activation sequence element (UASR) in the CIT2 promoter. The core binding site is 5'-GGTCAC-3'. The polypeptide is Retrograde regulation protein 1 (RTG1) (Saccharomyces cerevisiae (strain ATCC 204508 / S288c) (Baker's yeast)).